Reading from the N-terminus, the 210-residue chain is Protein SYM1 (210 aa).

The next 4 membrane-spanning stretches (helical) occupy residues 22-39 (IMTG…QLLF), 68-84 (AVVY…DRWY), 112-129 (LGFA…MSLL), and 173-189 (LLAA…FLSY).

The protein belongs to the peroxisomal membrane protein PXMP2/4 family.

The protein localises to the mitochondrion inner membrane. Its function is as follows. May be involved in cellular response to stress. Required to maintain mitochondrial DNA (mtDNA) integrity and stability. The sequence is that of Protein SYM1 (SYM1) from Candida glabrata (strain ATCC 2001 / BCRC 20586 / JCM 3761 / NBRC 0622 / NRRL Y-65 / CBS 138) (Yeast).